We begin with the raw amino-acid sequence, 503 residues long: MAHEGPRQVRDRGMTRSKAEKVRPPTVPVPQVDIVPGRLTEAEWIAFTALEEGEDVVGDILADLVARVIDSAFKVYLTQQCIPFTISQAREAMLQITEWRFLARDEGESAVAEDPTWGEDEEPLACTTDAWAQGSVPVLHARASMGLEETFQGEDQDSVDQIPLGGSWKDSGSQEPMESWELTVTPDSPPTPELLQETGPRSPLEKLGDQSRSDQTDLFAVGSSNSSSQLSMEMVPAGSTHASLELSLVASPQASVERAQPISSQFSLEDLYNCTPQPHAAGDRLELREEKVPLIPSRVLVSDPSAGGPTTLNPSAGFQPQPPWLAEERPSALHSRIGRMGTTARLDPARLPRPDMARSPSPKLWPGAKWPSGWEGEAELLGELWAGRTRVPPQGLDLGDRESQDPHQYRHPVPQVLEATSQVTWKPVLLPGALKLAPGVSMWNPSTQVLLSSSEPQRNDREGSASPPIHTGAPKPQVTVAQLMNSALKMWSLPSKRLPNSKP.

Basic and acidic residues-rich tracts occupy residues 1–23 (MAHE…EKVR) and 203–215 (PLEK…RSDQ). Disordered stretches follow at residues 1 to 29 (MAHE…TVPV) and 149 to 227 (ETFQ…SNSS). A phosphoserine mark is found at serine 239 and serine 243. Disordered stretches follow at residues 346-370 (LDPA…GAKW) and 450-475 (LLSS…GAPK). Basic and acidic residues predominate over residues 347 to 356 (DPARLPRPDM).

This is an uncharacterized protein from Bos taurus (Bovine).